A 237-amino-acid chain; its full sequence is LexA repressor (237 aa).

Positions 26-46 (FDEMKEALDLRSKSGIHRLIT) form a DNA-binding region, H-T-H motif. Catalysis depends on for autocatalytic cleavage activity residues S158 and K196.

This sequence belongs to the peptidase S24 family. Homodimer.

It carries out the reaction Hydrolysis of Ala-|-Gly bond in repressor LexA.. In terms of biological role, represses a number of genes involved in the response to DNA damage (SOS response), including recA and lexA. In the presence of single-stranded DNA, RecA interacts with LexA causing an autocatalytic cleavage which disrupts the DNA-binding part of LexA, leading to derepression of the SOS regulon and eventually DNA repair. The sequence is that of LexA repressor from Xanthobacter autotrophicus (strain ATCC BAA-1158 / Py2).